We begin with the raw amino-acid sequence, 440 residues long: Histidinol dehydrogenase (440 aa).

Positions 139, 200, and 223 each coordinate NAD(+). Substrate-binding residues include S246, Q268, and H271. Zn(2+) contacts are provided by Q268 and H271. Catalysis depends on proton acceptor residues E336 and H337. Substrate is bound by residues H337, D370, E424, and H429. D370 contributes to the Zn(2+) binding site. H429 provides a ligand contact to Zn(2+).

It belongs to the histidinol dehydrogenase family. Zn(2+) is required as a cofactor.

It carries out the reaction L-histidinol + 2 NAD(+) + H2O = L-histidine + 2 NADH + 3 H(+). The protein operates within amino-acid biosynthesis; L-histidine biosynthesis; L-histidine from 5-phospho-alpha-D-ribose 1-diphosphate: step 9/9. In terms of biological role, catalyzes the sequential NAD-dependent oxidations of L-histidinol to L-histidinaldehyde and then to L-histidine. This chain is Histidinol dehydrogenase, found in Bordetella bronchiseptica (strain ATCC BAA-588 / NCTC 13252 / RB50) (Alcaligenes bronchisepticus).